A 609-amino-acid chain; its full sequence is Vanadium chloroperoxidase (609 aa).

Vanadate is bound by residues Lys-353, Arg-360, Ser-402, Gly-403, His-404, Arg-490, and His-496. His-404 acts as the Proton donor in catalysis. The tract at residues 569–609 (KPTPPEIQPMPQETPVQKPVGQQPVKGMWEEEQAPVVKEAP) is disordered.

Belongs to the vanadium-dependent haloperoxidase family. As to quaternary structure, homotetramer. The cofactor is vanadate. Post-translationally, the N-terminus is blocked.

Its subcellular location is the secreted. It catalyses the reaction RH + Cl(-) + H2O2 = RCl + 2 H2O.. In terms of biological role, catalyzes the oxidation of chloride in the presence of hydrogen peroxide to hypochlorous acid (ClOH), which in turn can react with a nucleophilic acceptor (RH), to form a chlorinated compound. The polypeptide is Vanadium chloroperoxidase (CPO) (Curvularia inaequalis (Helminthosporium inaequale)).